A 663-amino-acid chain; its full sequence is Dual specificity protein phosphatase 8 (663 aa).

The 116-residue stretch at 23–138 folds into the Rhodanese domain; sequence GPGGPLVIDS…FSSCFPGLCE (116 aa). The region spanning 160-302 is the Tyrosine-protein phosphatase domain; it reads GLTRILPHLY…LLEYERSLKL (143 aa). Catalysis depends on C246, which acts as the Phosphocysteine intermediate. Disordered stretches follow at residues 313–367 and 404–624; these read LGTP…STAP and YAPS…FKRR. Low complexity-rich tracts occupy residues 334–353, 427–448, and 546–557; these read STSESAATGSEAATAAREGS, LDSPSGGTLGLPSPSPDSPDSV, and SAGAPGPGNSSS. A compositionally biased stretch (gly residues) spans 558-577; that stretch reads SGGGGGGGGGGGGGGGGGGS. The span at 578 to 600 shows a compositional bias: low complexity; that stretch reads SSSNSSSSSSSSSSSSSSSSSSS.

This sequence belongs to the protein-tyrosine phosphatase family. Non-receptor class dual specificity subfamily. As to quaternary structure, monomer. Expressed predominantly in brain and lung.

It is found in the cytoplasm. It localises to the nucleus. The enzyme catalyses O-phospho-L-tyrosyl-[protein] + H2O = L-tyrosyl-[protein] + phosphate. The catalysed reaction is O-phospho-L-seryl-[protein] + H2O = L-seryl-[protein] + phosphate. It carries out the reaction O-phospho-L-threonyl-[protein] + H2O = L-threonyl-[protein] + phosphate. Has phosphatase activity with synthetic phosphatase substrates and negatively regulates mitogen-activated protein kinase activity, presumably by catalysing their dephosphorylation. Expected to display protein phosphatase activity toward phosphotyrosine, phosphoserine and phosphothreonine residues. The chain is Dual specificity protein phosphatase 8 (Dusp8) from Mus musculus (Mouse).